The sequence spans 500 residues: Lysine--tRNA ligase (500 aa).

Residues E406 and E413 each coordinate Mg(2+).

The protein belongs to the class-II aminoacyl-tRNA synthetase family. As to quaternary structure, homodimer. Requires Mg(2+) as cofactor.

The protein resides in the cytoplasm. It carries out the reaction tRNA(Lys) + L-lysine + ATP = L-lysyl-tRNA(Lys) + AMP + diphosphate. The chain is Lysine--tRNA ligase from Sulfolobus acidocaldarius (strain ATCC 33909 / DSM 639 / JCM 8929 / NBRC 15157 / NCIMB 11770).